The chain runs to 383 residues: Chitinase-3-like protein 1 (383 aa).

The N-terminal stretch at 1–21 is a signal peptide; it reads MGLRAAHTGFVVLVLLQSCAA. A GH18 domain is found at 22–383; sequence YKLICYYTSW…SAIKDVLARV (362 aa). C26 and C51 are oxidised to a cystine. Residue N60 is glycosylated (N-linked (GlcNAc...) asparagine). Chitin contacts are provided by residues 70-71, 97-100, Y141, 204-207, and R263; these read EW, GGWN, and LTYD. A disulfide bond links C300 and C364. The tract at residues 324-338 is important for AKT1 activation and IL8 production; the sequence is QWVAYDDQESVKNKA. W352 lines the chitin pocket. N367 carries an N-linked (GlcNAc...) asparagine glycan.

The protein belongs to the glycosyl hydrolase 18 family. Monomer. Glycosylated. As to expression, mammary secretions collected during the non-lactating period.

The protein localises to the secreted. The protein resides in the extracellular space. It is found in the cytoplasm. It localises to the perinuclear region. Its subcellular location is the endoplasmic reticulum. Carbohydrate-binding lectin with a preference for chitin. Has no chitinase activity. May play a role in tissue remodeling and in the capacity of cells to respond to and cope with changes in their environment. Plays a role in T-helper cell type 2 (Th2) inflammatory response and IL-13-induced inflammation, regulating allergen sensitization, inflammatory cell apoptosis, dendritic cell accumulation and M2 macrophage differentiation. Facilitates invasion of pathogenic enteric bacteria into colonic mucosa and lymphoid organs. Mediates activation of AKT1 signaling pathway and subsequent IL8 production in colonic epithelial cells. Regulates antibacterial responses in lung by contributing to macrophage bacterial killing, controlling bacterial dissemination and augmenting host tolerance. Also regulates hyperoxia-induced injury, inflammation and epithelial apoptosis in lung. This is Chitinase-3-like protein 1 (CHI3L1) from Bos taurus (Bovine).